Here is a 392-residue protein sequence, read N- to C-terminus: Probable inactive serine/threonine-protein kinase DDB_G0280855 (392 aa).

The 304-residue stretch at 46 to 349 (ITKKTIYACD…IERIIQHPYF (304 aa)) folds into the Protein kinase domain. ATP-binding positions include 52–60 (YACDINGTM) and lysine 75.

This sequence belongs to the protein kinase superfamily. CMGC Ser/Thr protein kinase family. MAP kinase subfamily.

The polypeptide is Probable inactive serine/threonine-protein kinase DDB_G0280855 (Dictyostelium discoideum (Social amoeba)).